Reading from the N-terminus, the 492-residue chain is Cell death protein 6 (492 aa).

Positions 19–29 (GNNINGEGSSS) are enriched in low complexity. The segment at 19 to 38 (GNNINGEGSSSPSTSAPQVK) is disordered. One can recognise a PID domain in the interval 55–215 (INGHVEYVAR…YILKKKIVEL (161 aa)). Disordered regions lie at residues 241 to 385 (TGPP…STAA) and 464 to 492 (TGDL…NLKQ). The span at 244-268 (PIYPGLGPPALPLSPMPQGPPPNIP) shows a compositional bias: pro residues. Positions 300–312 (ASPSVSPASTSPS) are enriched in low complexity. A compositionally biased stretch (pro residues) spans 313-333 (GPAPSIPPPRPPALAPPPPVA). Basic and acidic residues predominate over residues 373-383 (FDPRAGEKKST).

Belongs to the ced-6 family. As to quaternary structure, homodimer. Interacts with ced-1. Interacts with E3 ubiquitin-protein ligase trim-21. As to expression, detected in gonadal sheath cells.

It localises to the cytoplasm. Its function is as follows. May function as an adapter protein in a pathway that mediates recognition and phagocytosis of apoptotic cells during normal development. Promotes engulfment of cells at both early and late stages of apoptosis. Required for actin reorganization around apoptotic cells. Plays a role in protecting dopaminergic neurons from oxidative stress-induced degeneration. Mediates recruitment of E3 ubiquitin-protein ligase trim-21 to the apoptotic cell surface which promotes ubiquitination and degradation of ced-1. This Caenorhabditis elegans protein is Cell death protein 6.